Here is a 147-residue protein sequence, read N- to C-terminus: uncharacterized protein (147 aa).

In terms of domain architecture, ABM spans 50–138 (IVVAGNIKVK…LLAKPAEIKI (89 aa)).

Belongs to the LsrG family.

This is an uncharacterized protein from Synechocystis sp. (strain ATCC 27184 / PCC 6803 / Kazusa).